Reading from the N-terminus, the 89-residue chain is Small ribosomal subunit protein bS20 (89 aa).

Residues 1-28 form a disordered region; sequence MTLANIKSAKKRAIQSEKRRQHNASQRS.

It belongs to the bacterial ribosomal protein bS20 family.

Its function is as follows. Binds directly to 16S ribosomal RNA. The chain is Small ribosomal subunit protein bS20 from Pasteurella multocida (strain Pm70).